Consider the following 407-residue polypeptide: D-galactonate dehydratase family member Pjdr2_1176 (407 aa).

Aspartate 208 lines the Mg(2+) pocket. D-arabinonate is bound at residue histidine 210. Mg(2+) is bound by residues glutamate 234 and glutamate 260. D-arabinonate contacts are provided by glutamate 260, arginine 281, and glutamate 337.

This sequence belongs to the mandelate racemase/muconate lactonizing enzyme family. GalD subfamily.

In terms of biological role, has no detectable activity with D-mannonate and with a panel of 70 other acid sugars (in vitro), in spite of the conservation of the residues that are expected to be important for catalytic activity and cofactor binding. May have evolved a divergent function. This Paenibacillus sp. (strain JDR-2) protein is D-galactonate dehydratase family member Pjdr2_1176.